Here is a 105-residue protein sequence, read N- to C-terminus: L-rhamnose mutarotase (105 aa).

Y19 is a binding site for substrate. The Proton donor role is filled by H23. Substrate is bound by residues Y42 and 77–78 (WW).

This sequence belongs to the rhamnose mutarotase family. Homodimer.

Its subcellular location is the cytoplasm. It catalyses the reaction alpha-L-rhamnose = beta-L-rhamnose. It participates in carbohydrate metabolism; L-rhamnose metabolism. Involved in the anomeric conversion of L-rhamnose. The polypeptide is L-rhamnose mutarotase (Mesorhizobium japonicum (strain LMG 29417 / CECT 9101 / MAFF 303099) (Mesorhizobium loti (strain MAFF 303099))).